We begin with the raw amino-acid sequence, 692 residues long: Elongation factor G (692 aa).

One can recognise a tr-type G domain in the interval 8–283 (EDYRNFGIMA…AVVDYLPSPL (276 aa)). Residues 17 to 24 (AHIDAGKT), 81 to 85 (DTPGH), and 135 to 138 (NKMD) each bind GTP.

This sequence belongs to the TRAFAC class translation factor GTPase superfamily. Classic translation factor GTPase family. EF-G/EF-2 subfamily.

Its subcellular location is the cytoplasm. In terms of biological role, catalyzes the GTP-dependent ribosomal translocation step during translation elongation. During this step, the ribosome changes from the pre-translocational (PRE) to the post-translocational (POST) state as the newly formed A-site-bound peptidyl-tRNA and P-site-bound deacylated tRNA move to the P and E sites, respectively. Catalyzes the coordinated movement of the two tRNA molecules, the mRNA and conformational changes in the ribosome. In Caulobacter sp. (strain K31), this protein is Elongation factor G.